The chain runs to 361 residues: Histidinol-phosphate aminotransferase (361 aa).

N6-(pyridoxal phosphate)lysine is present on lysine 219.

This sequence belongs to the class-II pyridoxal-phosphate-dependent aminotransferase family. Histidinol-phosphate aminotransferase subfamily. In terms of assembly, homodimer. It depends on pyridoxal 5'-phosphate as a cofactor.

It carries out the reaction L-histidinol phosphate + 2-oxoglutarate = 3-(imidazol-4-yl)-2-oxopropyl phosphate + L-glutamate. The protein operates within amino-acid biosynthesis; L-histidine biosynthesis; L-histidine from 5-phospho-alpha-D-ribose 1-diphosphate: step 7/9. The protein is Histidinol-phosphate aminotransferase of Acinetobacter baumannii (strain SDF).